Reading from the N-terminus, the 236-residue chain is uncharacterized protein (236 aa).

Residues 1-29 (MKGGDKMKKLILLMLLLPISLIGCTDEES) form the signal peptide.

This is an uncharacterized protein from Archaeoglobus fulgidus (strain ATCC 49558 / DSM 4304 / JCM 9628 / NBRC 100126 / VC-16).